The sequence spans 490 residues: Probable G-protein coupled receptor npr-8 (490 aa).

Topologically, residues 1–55 are extracellular; the sequence is MEVKDIDNYCDRGISPNASNYLTYPFDGLCLQKFFYQLQTSLRRFTPYEEIIYTT. A glycan (N-linked (GlcNAc...) asparagine) is linked at Asn-17. A helical transmembrane segment spans residues 56-76; the sequence is VYIIISVAAVIGNGLVIMAVV. Topologically, residues 77 to 86 are cytoplasmic; that stretch reads RKKTMRTNRN. Residues 87 to 107 traverse the membrane as a helical segment; that stretch reads VLILNLALSNLILAITNIPFL. Residues 108-125 are Extracellular-facing; that stretch reads WLPSIDFEFPYSRFFCKF. Residues 126–146 form a helical membrane-spanning segment; the sequence is ANVLPGSNIYCSTLTISVMAI. At 147–166 the chain is on the cytoplasmic side; sequence DRYYSVKKLKIASNRKQCFH. Residues 167–187 form a helical membrane-spanning segment; that stretch reads AVLVSLAIWIVSFILSLPLLL. At 188–236 the chain is on the extracellular side; sequence YYETSMLYVMREIRVVDQSGQEVIRSYGWRQCRLVSAGRLPDITQSIQL. Residues 237–257 form a helical membrane-spanning segment; sequence LMSILQVAFLYIVPLFVLSIF. Residues 258 to 331 are Cytoplasmic-facing; the sequence is NVKLTRFLKT…QRTNRTTSLL (74 aa). Residues 272 to 322 are disordered; sequence MSKTRAPPKRFDRSDSHHNSLKNNNNHTSSLRSPSMPSIRSSITERNKTNQ. Basic and acidic residues predominate over residues 280 to 289; it reads KRFDRSDSHH. Residues 292 to 313 are compositionally biased toward low complexity; the sequence is LKNNNNHTSSLRSPSMPSIRSS. Residues 332–352 form a helical membrane-spanning segment; that stretch reads IAMAGSYAALWFPFTLITFLI. The Extracellular segment spans residues 353 to 374; sequence DFELIINQDYVNLVERIDQTCK. A helical membrane pass occupies residues 375–395; the sequence is MVSMLSICVNPFLYGFLNTNF. Topologically, residues 396–490 are cytoplasmic; it reads RHEFSDIYYR…DDDIEKDSFV (95 aa).

Belongs to the G-protein coupled receptor 1 family.

It is found in the cell membrane. Its function is as follows. Not known. Putative receptor. The sequence is that of Probable G-protein coupled receptor npr-8 from Caenorhabditis elegans.